Here is a 322-residue protein sequence, read N- to C-terminus: Lipoyl synthase 2 (322 aa).

A disordered region spans residues 1–36 (MKVILDLLNNDPRTTQRTERPRHPEKANRPDTPMES). The span at 14 to 34 (TTQRTERPRHPEKANRPDTPM) shows a compositional bias: basic and acidic residues. Residues Cys-67, Cys-72, Cys-78, Cys-93, Cys-97, Cys-100, and Ser-306 each contribute to the [4Fe-4S] cluster site. One can recognise a Radical SAM core domain in the interval 79–295 (WAKKHATFMI…EKTAYAKGFL (217 aa)).

Belongs to the radical SAM superfamily. Lipoyl synthase family. [4Fe-4S] cluster serves as cofactor.

It localises to the cytoplasm. It carries out the reaction [[Fe-S] cluster scaffold protein carrying a second [4Fe-4S](2+) cluster] + N(6)-octanoyl-L-lysyl-[protein] + 2 oxidized [2Fe-2S]-[ferredoxin] + 2 S-adenosyl-L-methionine + 4 H(+) = [[Fe-S] cluster scaffold protein] + N(6)-[(R)-dihydrolipoyl]-L-lysyl-[protein] + 4 Fe(3+) + 2 hydrogen sulfide + 2 5'-deoxyadenosine + 2 L-methionine + 2 reduced [2Fe-2S]-[ferredoxin]. Its pathway is protein modification; protein lipoylation via endogenous pathway; protein N(6)-(lipoyl)lysine from octanoyl-[acyl-carrier-protein]: step 2/2. Its function is as follows. Catalyzes the radical-mediated insertion of two sulfur atoms into the C-6 and C-8 positions of the octanoyl moiety bound to the lipoyl domains of lipoate-dependent enzymes, thereby converting the octanoylated domains into lipoylated derivatives. This is Lipoyl synthase 2 from Bradyrhizobium diazoefficiens (strain JCM 10833 / BCRC 13528 / IAM 13628 / NBRC 14792 / USDA 110).